The chain runs to 655 residues: p-hydroxybenzoic acid efflux pump subunit AaeB (655 aa).

11 helical membrane passes run 13 to 33 (FAVKLATAIVLALFVGFHFQL), 38 to 58 (WAVLTAAIVAAGPAFAAGGEP), 69 to 89 (LRIIGTFIGCIAGLVIIIAMI), 93 to 113 (LLMILVCCIWAGFCTWISSLV), 121 to 141 (WGLAGYTALIIVITIQPEPLL), 152 to 172 (EIVIGIVCAIMADLLFSPRSI), 370 to 390 (LFWLWTGWTSGSGAMVMIAVV), 407 to 427 (FIYGTLAALPLGLLYFLVIIP), 431 to 451 (QSMLLLCISLAVLGFFLGIEV), 459 to 479 (MGALASTINIIVLDNPMTFHF), and 482 to 502 (FLDSALGQIVGCVLAFTVILL).

It belongs to the aromatic acid exporter ArAE (TC 2.A.85) family.

The protein localises to the cell inner membrane. In terms of biological role, forms an efflux pump with AaeA. Could function as a metabolic relief valve, allowing to eliminate certain compounds when they accumulate to high levels in the cell. The polypeptide is p-hydroxybenzoic acid efflux pump subunit AaeB (Escherichia coli (strain SMS-3-5 / SECEC)).